The sequence spans 87 residues: UPF0367 protein Pro_0144 (87 aa).

The protein belongs to the UPF0367 family.

The chain is UPF0367 protein Pro_0144 from Prochlorococcus marinus (strain SARG / CCMP1375 / SS120).